The primary structure comprises 530 residues: Carbohydrate sulfotransferase 2 (530 aa).

Residues 1 to 54 (MSRSPQRALPPGALPRLLQAAPAAAPRALLPQWPRRPGRRWPASPLGMKVFRRK) lie on the Cytoplasmic side of the membrane. The chain crosses the membrane as a helical; Signal-anchor for type II membrane protein span at residues 55–75 (ALVLCAGYALLLVLTMLNLLD). Topologically, residues 76-530 (YKWHKEPLQQ…SKTLLRKPRL (455 aa)) are lumenal. Residues 89 to 119 (DGPLGAAAGAAGGSWGRPGPPPAGPPRAHAR) form a disordered region. 173–179 (WRSGSSF) is a 3'-phosphoadenylyl sulfate binding site. Asparagine 243 is a glycosylation site (N-linked (GlcNAc...) asparagine). Residue 332 to 340 (RDPRAVASS) coordinates 3'-phosphoadenylyl sulfate. Residues asparagine 457 and asparagine 475 are each glycosylated (N-linked (GlcNAc...) asparagine).

Belongs to the sulfotransferase 1 family. Gal/GlcNAc/GalNAc subfamily. In terms of assembly, homodimer; disulfide-linked. Homodimerization is not essential for enzyme activity. Post-translationally, glycosylation at Asn-475 is required for catalytic activity. As to expression, widely expressed. Highly expressed in bone marrow, peripheral blood leukocytes, spleen, brain, spinal cord, ovary and placenta. Expressed by high endothelial cells (HEVs) and leukocytes.

It is found in the golgi apparatus. Its subcellular location is the trans-Golgi network membrane. The enzyme catalyses 3-O-{N-acetyl-beta-D-glucosaminyl-(1-&gt;3)-beta-D-galactosyl-(1-&gt;3)-N-acetyl-alpha-D-galactosaminyl}-L-threonyl-[protein] + 3'-phosphoadenylyl sulfate = 3-O-{6-O-sulfo-N-acetyl-beta-D-glucosaminyl-(1-&gt;3)-beta-D-galactosyl-(1-&gt;3)-N-acetyl-alpha-D-galactosaminyl}-L-threonyl-[protein] + adenosine 3',5'-bisphosphate + H(+). The catalysed reaction is 3-O-{N-acetyl-beta-D-glucosaminyl-(1-&gt;3)-beta-D-galactosyl-(1-&gt;3)-N-acetyl-alpha-D-galactosaminyl}-L-seryl-[protein] + 3'-phosphoadenylyl sulfate = 3-O-{6-O-sulfo-N-acetyl-beta-D-glucosaminyl-(1-&gt;3)-beta-D-galactosyl-(1-&gt;3)-N-acetyl-alpha-D-galactosaminyl}-L-seryl-[protein] + adenosine 3',5'-bisphosphate + H(+). It catalyses the reaction a 3-O-{beta-D-galactosyl-(1-&gt;3)-[N-acetyl-beta-D-glucosaminyl-(1-&gt;6)]-N-acetyl-alpha-D-galactosaminyl}-L-threonyl-[protein] + 3'-phosphoadenylyl sulfate = 3-O-{beta-D-galactosyl-(1-&gt;3)-[6-O-sulfo-N-acetyl-beta-D-glucosaminyl-(1-&gt;6)]-N-acetyl-alpha-D-galactosaminyl}-L-threonyl-[protein] + adenosine 3',5'-bisphosphate + H(+). It carries out the reaction 3-O-{beta-D-galactosyl-(1-&gt;3)-[N-acetyl-beta-D-glucosaminyl-(1-&gt;6)]-N-acetyl-alpha-D-galactosaminyl}-L-seryl-[protein] + 3'-phosphoadenylyl sulfate = 3-O-{beta-D-galactosyl-(1-&gt;3)-[6-O-sulfo-N-acetyl-beta-D-glucosaminyl-(1-&gt;6)]-N-acetyl-alpha-D-galactosaminyl}-L-seryl-[protein] + adenosine 3',5'-bisphosphate + H(+). It functions in the pathway protein modification; carbohydrate sulfation. Sulfotransferase that utilizes 3'-phospho-5'-adenylyl sulfate (PAPS) as sulfonate donor to catalyze the transfer of sulfate to position 6 of non-reducing N-acetylglucosamine (GlcNAc) residues within keratan-like structures on N-linked glycans and within mucin-associated glycans that can ultimately serve as SELL ligands. SELL ligands are present in high endothelial cells (HEVs) and play a central role in lymphocyte homing at sites of inflammation. Participates in biosynthesis of the SELL ligand sialyl 6-sulfo Lewis X and in lymphocyte homing to Peyer patches. Has no activity toward O-linked sugars. Its substrate specificity may be influenced by its subcellular location. Sulfates GlcNAc residues at terminal, non-reducing ends of oligosaccharide chains. In Homo sapiens (Human), this protein is Carbohydrate sulfotransferase 2 (CHST2).